The following is a 737-amino-acid chain: MDPFFLNTQHVELLVSGKQSSPQDLLGIVSESLNQDRIVLFRPGAKTVFVELQGKIQQAESHHSGIFSLPVTKGISPQDYRVYHQNGLLAHDPYAFPLLWGEIDSFLFHEGTHQHIYDRMGAIPCEIGGVPGVRFVIWAPHAQRVSVVGDFNCWHGLVNPLHKVSDQGVWELFVPGLTAGSCYKWEIVTASGQVLIKSDPYGKFFGSPPQSVSVVVDDRYEWGDKEWLDERSKKAEGPMNIYEVHVGSWRWQEEQPLNYRELADQLSLYCKQMHYTHVELLPVTEHPLNESWGYQTTGYYAPTSRYGSFEDLQYFIDTMHQHGIGVILDWVPGHFPVDSFAMSNFDGTPLYEYTRNPSPLHPHWHTYTFDYAKPEVCNFLLGSALFWIDKMHIDGIRVDAVSSMLYLDYGRNPGEWIPNRYGGRENLDAVRFLQQFNTIIHEKYPGVLTFAEESTTFPKITVSVEEGGLGFDYKWNMGWMHDTLHYFEKDFPYRPYHQSDLTFPQWYAFSERFLLPFSHDEVVHGKRSLIGKMPGDAWRQFAQLRLLLGYQICQPGKKLLFMGGEFGQGREWSPNRELDWDLLDIHYHQGVHLCSQKLNSLYVNSPQLWKGDHLPQSFRWIDFSDTRNGVVAYLRFASDEDKEALLCVHHFGVNHFLHYILPMLPMKSCSLLMNTDDLAFGGSGKGFRNPKMLTPEMVRKEKTSSELAPLDDDGSVAWGLDIEMPPSATLIFSVTLQ.

D399 acts as the Nucleophile in catalysis. Catalysis depends on E452, which acts as the Proton donor.

This sequence belongs to the glycosyl hydrolase 13 family. GlgB subfamily. In terms of assembly, monomer.

The catalysed reaction is Transfers a segment of a (1-&gt;4)-alpha-D-glucan chain to a primary hydroxy group in a similar glucan chain.. It participates in glycan biosynthesis; glycogen biosynthesis. Catalyzes the formation of the alpha-1,6-glucosidic linkages in glycogen by scission of a 1,4-alpha-linked oligosaccharide from growing alpha-1,4-glucan chains and the subsequent attachment of the oligosaccharide to the alpha-1,6 position. The protein is 1,4-alpha-glucan branching enzyme GlgB of Chlamydia muridarum (strain MoPn / Nigg).